Here is a 903-residue protein sequence, read N- to C-terminus: E3 ubiquitin-protein ligase DDB_G0292642 (903 aa).

Disordered stretches follow at residues 115–137, 167–236, 284–366, 415–487, and 549–576; these read FTLP…SSSD, LLKR…VIGS, VNKT…NNLK, TPSL…TTEI, and DDSE…GSEG. Composition is skewed to low complexity over residues 120–130 and 178–216; these read TTNNNNNNTTN and TTTT…TIDT. Residues 217–232 show a composition bias toward acidic residues; that stretch reads SSEDDDESISSSDDDI. Low complexity-rich tracts occupy residues 287-301 and 311-323; these read TSTT…TTTT and NRNN…NNNN. Residues 313–352 are a coiled coil; that stretch reads NNNNNNNNNNNKRFEIESEEESETDISSEEEENNNNNNNN. Residues 329–345 are compositionally biased toward acidic residues; it reads ESEEESETDISSEEEEN. The span at 346–364 shows a compositional bias: low complexity; that stretch reads NNNNNNNSNNNNNSNNNNN. Over residues 415–427 the composition is skewed to polar residues; that stretch reads TPSLRLSSAHLPN. The segment covering 428 to 443 has biased composition (low complexity); sequence TTTTTTTTTTTTTTTT. Acidic residues-rich tracts occupy residues 451–466 and 549–568; these read NDDD…DSEI and DDSE…ESDS. Residues 542–569 adopt a coiled-coil conformation; it reads AELVFEYDDSEEEEEEEEEEEGEESDSE. The segment at 612–832 is TRIAD supradomain; sequence EPVECKICYM…NEYPECFDRQ (221 aa). Zn(2+) is bound by residues C616, C619, C634, H636, C639, C642, C661, C666, C704, C709, C725, C728, C733, C736, H741, C746, C782, and C785. Residues 616–666 form an RING-type 1 zinc finger; the sequence is CKICYMEYDQSNEVFTLECDHVYCFDCITEHLRILITEGRVLDISCPHPQC. Residues 683–746 form an IBR-type zinc finger; sequence NWLKYQKFSM…GEYSHEGAKC (64 aa). Residues 782–811 form an RING-type 2; atypical zinc finger; sequence CPTCKSHIEKHDGCNHMTCINCQHQFCWLC. C795 is an active-site residue. 6 residues coordinate Zn(2+): C800, C803, C808, C811, H819, and C828. A helical membrane pass occupies residues 864-884; sequence TAAFTVGAPLLLIGGAVLLCV.

Belongs to the RBR family. RNF14 subfamily.

It localises to the membrane. It catalyses the reaction [E2 ubiquitin-conjugating enzyme]-S-ubiquitinyl-L-cysteine + [acceptor protein]-L-lysine = [E2 ubiquitin-conjugating enzyme]-L-cysteine + [acceptor protein]-N(6)-ubiquitinyl-L-lysine.. It participates in protein modification; protein ubiquitination. In terms of biological role, E3 ubiquitin-protein ligase. This Dictyostelium discoideum (Social amoeba) protein is E3 ubiquitin-protein ligase DDB_G0292642.